A 378-amino-acid polypeptide reads, in one-letter code: Ribosomal RNA large subunit methyltransferase G (378 aa).

Belongs to the methyltransferase superfamily. RlmG family.

It is found in the cytoplasm. It carries out the reaction guanosine(1835) in 23S rRNA + S-adenosyl-L-methionine = N(2)-methylguanosine(1835) in 23S rRNA + S-adenosyl-L-homocysteine + H(+). Its function is as follows. Specifically methylates the guanine in position 1835 (m2G1835) of 23S rRNA. The polypeptide is Ribosomal RNA large subunit methyltransferase G (Shewanella baltica (strain OS195)).